A 622-amino-acid polypeptide reads, in one-letter code: MSQTSLEPLIISIIKLQILQLWLKLIAVGWNLGSNDDELYTELWKACAGPLVEVPRYGERVFYFPQGHMEQLVASTNQGVVDQEIPVFNLPPKILCRVLSVTLKAEHETDEVYAQITLQPEEDQSEPTSLDPPLVEPAKPTVDSFVKILTASDTSTHGGFSVLRKHATECLPSLDMTQPTPTQELVARDLHGYEWRFKHIFRGQPRRHLLTTGWSTFVTSKRLVAGDAFVFLRGETGDLRVGVRRLAKQQSTMPASVISSQSMRLGVLATASHAVTTTTIFVVFYKPRISQFIISVNKYMMAMKNGFSLGMRYRMRFEGEESPERIFTGTIIGSGDLSSQWPASKWRSLQIQWDEPSSIQRPNKVSPWEIEPFSPSALTPTPTQQQSKSKRSRPISEITGSPVASSFLSSFSQSHESNPSVKLLFQDPATERNSNKSVFSSGLQCKITEAPVTSSCRLFGFDLTSKPASATIPHDKQLISVDSNISDSTTKCQDPNSSNSPKEQKQQTSTRSRIKVQMQGTAVGRAVDLTLLRSYDELIKELEKMFEIEGELSPKDKWAIVFTDDEGDRMLVGDDPWNEFCKMAKKLFIYPSDEVKKMRSKSLLGDKGTIVNLESDQRTVHV.

The TF-B3 DNA-binding region spans Phe145–Ala247. Disordered regions lie at residues Ser358 to Ile398 and Ser483 to Arg513. 2 stretches are compositionally biased toward polar residues: residues Ser376–Ser387 and Ser483–Arg511. The 84-residue stretch at Arg511 to Glu594 folds into the PB1 domain.

This sequence belongs to the ARF family. Homodimers and heterodimers.

It is found in the nucleus. Functionally, auxin response factors (ARFs) are transcriptional factors that bind specifically to the DNA sequence 5'-TGTCTC-3' found in the auxin-responsive promoter elements (AuxREs). Could act as transcriptional activator or repressor. Formation of heterodimers with Aux/IAA proteins may alter their ability to modulate early auxin response genes expression. The polypeptide is Auxin response factor 11 (ARF11) (Arabidopsis thaliana (Mouse-ear cress)).